The chain runs to 41 residues: Photosystem I reaction center subunit IX (41 aa).

The chain crosses the membrane as a helical span at residues 7–27 (YLSSAPILATIWFAITAGILI).

Belongs to the PsaJ family.

Its subcellular location is the cellular thylakoid membrane. Its function is as follows. May help in the organization of the PsaE and PsaF subunits. The sequence is that of Photosystem I reaction center subunit IX from Synechococcus sp. (strain ATCC 27144 / PCC 6301 / SAUG 1402/1) (Anacystis nidulans).